Reading from the N-terminus, the 619-residue chain is CLPTM1-like membrane protein cnrB (619 aa).

Residues Met-1–Gln-21 are disordered. The segment covering Ala-9 to Gln-21 has biased composition (low complexity). The next 6 membrane-spanning stretches (helical) occupy residues Ile-26–Ala-46, Trp-324–Phe-344, Leu-360–Leu-380, Thr-384–Gly-404, Tyr-445–His-465, and Val-474–Ile-496. Residues Ser-566–Val-619 are disordered. Over residues Gln-574–Glu-590 the composition is skewed to basic and acidic residues. Positions Lys-591–Ser-605 are enriched in acidic residues.

This sequence belongs to the CLPTM1 family.

The protein resides in the membrane. The protein is CLPTM1-like membrane protein cnrB (cnrB) of Dictyostelium discoideum (Social amoeba).